Here is a 431-residue protein sequence, read N- to C-terminus: Argininosuccinate lyase (431 aa).

This sequence belongs to the lyase 1 family. Argininosuccinate lyase subfamily.

It is found in the cytoplasm. The enzyme catalyses 2-(N(omega)-L-arginino)succinate = fumarate + L-arginine. Its pathway is amino-acid biosynthesis; L-arginine biosynthesis; L-arginine from L-ornithine and carbamoyl phosphate: step 3/3. This is Argininosuccinate lyase from Xanthomonas campestris pv. campestris (strain ATCC 33913 / DSM 3586 / NCPPB 528 / LMG 568 / P 25).